Here is a 133-residue protein sequence, read N- to C-terminus: Interleukin-4 (133 aa).

The signal sequence occupies residues 1 to 24 (MGLTSQLIPTLVCLLACTSNFVHG). Cystine bridges form between cysteine 27-cysteine 133, cysteine 48-cysteine 85, and cysteine 70-cysteine 105. Asparagine 62 carries N-linked (GlcNAc...) asparagine glycosylation.

This sequence belongs to the IL-4/IL-13 family.

Its subcellular location is the secreted. In terms of biological role, participates in at least several B-cell activation processes as well as of other cell types. It is a costimulator of DNA-synthesis. It induces the expression of class II MHC molecules on resting B-cells. It enhances both secretion and cell surface expression of IgE and IgG1. It also regulates the expression of the low affinity Fc receptor for IgE (CD23) on both lymphocytes and monocytes. Positively regulates IL31RA expression in macrophages. Stimulates autophagy in dendritic cells by interfering with mTORC1 signaling and through the induction of RUFY4. This chain is Interleukin-4 (IL4), found in Sus scrofa (Pig).